A 1058-amino-acid polypeptide reads, in one-letter code: Gem-associated protein 4 (1058 aa).

M1 bears the N-acetylmethionine mark. T84 bears the Phosphothreonine mark. Residues S86 and S205 each carry the phosphoserine modification. The interval 714-735 (LPKEKRCLSLDRKDLAIHILEL) is leucine-zipper.

In terms of assembly, part of the core SMN complex that contains SMN1, GEMIN2/SIP1, DDX20/GEMIN3, GEMIN4, GEMIN5, GEMIN6, GEMIN7, GEMIN8 and STRAP/UNRIP. Part of the SMN-Sm complex that contains SMN1, GEMIN2/SIP1, DDX20/GEMIN3, GEMIN4, GEMIN5, GEMIN6, GEMIN7, GEMIN8, STRAP/UNRIP and the Sm proteins SNRPB, SNRPD1, SNRPD2, SNRPD3, SNRPE, SNRPF and SNRPG. Interacts with GEMIN3; the interaction is direct. Interacts with GEMIN5. Interacts with GEMIN8; the interaction is direct. Interacts with several snRNP SM core proteins, including SNRPB, SNRPD1, SNRPD2, SNRPD3 and SNRPE. Interacts with PPP4R2.

The protein localises to the cytoplasm. It localises to the nucleus. The protein resides in the nucleolus. It is found in the gem. Its function is as follows. The SMN complex catalyzes the assembly of small nuclear ribonucleoproteins (snRNPs), the building blocks of the spliceosome, and thereby plays an important role in the splicing of cellular pre-mRNAs. Most spliceosomal snRNPs contain a common set of Sm proteins SNRPB, SNRPD1, SNRPD2, SNRPD3, SNRPE, SNRPF and SNRPG that assemble in a heptameric protein ring on the Sm site of the small nuclear RNA to form the core snRNP (Sm core). In the cytosol, the Sm proteins SNRPD1, SNRPD2, SNRPE, SNRPF and SNRPG are trapped in an inactive 6S pICln-Sm complex by the chaperone CLNS1A that controls the assembly of the core snRNP. To assemble core snRNPs, the SMN complex accepts the trapped 5Sm proteins from CLNS1A forming an intermediate. Binding of snRNA inside 5Sm triggers eviction of the SMN complex, thereby allowing binding of SNRPD3 and SNRPB to complete assembly of the core snRNP. The polypeptide is Gem-associated protein 4 (GEMIN4) (Homo sapiens (Human)).